Consider the following 385-residue polypeptide: FAD-dependent monooxygenase verC2 (385 aa).

FAD-binding residues include Arg27, Asp227, and Ala240. N-linked (GlcNAc...) asparagine glycosylation is present at Asn320. The helical transmembrane segment at 365–385 threads the bilayer; it reads WKTTIMFIALLTIVVLIYSFI.

This sequence belongs to the paxM FAD-dependent monooxygenase family. Requires FAD as cofactor.

Its subcellular location is the membrane. Its pathway is secondary metabolite biosynthesis; terpenoid biosynthesis. The protein operates within mycotoxin biosynthesis. Its function is as follows. FAD-dependent monooxygenase; part of the gene cluster that mediates the biosynthesis of the neurotoxin verrucosidin, a methylated alpha-pyrone polyketide that inhibits oxidative phosphorylation in mitochondria and thereby causes neurological diseases. The carbon backbone of verrucosidin is synthesized by the HR-PKS verA, and further modified by the other verrucodidin cluster enzymes. The chain is FAD-dependent monooxygenase verC2 from Penicillium polonicum.